Reading from the N-terminus, the 275-residue chain is Large ribosomal subunit protein uL2cz (275 aa).

Disordered stretches follow at residues Met1–Val22 and Asn226–Lys275.

It belongs to the universal ribosomal protein uL2 family. As to quaternary structure, part of the 50S ribosomal subunit.

Its subcellular location is the plastid. The protein resides in the chloroplast. This Chloranthus spicatus (Chulantree) protein is Large ribosomal subunit protein uL2cz (rpl2-A).